The sequence spans 492 residues: Catalase isozyme 2 (492 aa).

The segment at 1 to 32 (MDPYKFRPSSSNDTPFWTTNAGDPVSNNNSSM) is disordered. Positions 8 to 32 (PSSSNDTPFWTTNAGDPVSNNNSSM) are enriched in polar residues. Catalysis depends on residues histidine 65 and asparagine 138. Position 348 (tyrosine 348) interacts with heme.

This sequence belongs to the catalase family. As to quaternary structure, homotetramer. The cofactor is heme. Abundant in hypocotyls and roots. Low levels are seen in the endosperms and cotyledons.

The protein localises to the peroxisome. The protein resides in the glyoxysome. It catalyses the reaction 2 H2O2 = O2 + 2 H2O. Occurs in almost all aerobically respiring organisms and serves to protect cells from the toxic effects of hydrogen peroxide. This chain is Catalase isozyme 2 (CAT2), found in Ricinus communis (Castor bean).